The sequence spans 183 residues: Adenine phosphoribosyltransferase 3 (183 aa).

The protein belongs to the purine/pyrimidine phosphoribosyltransferase family. As to quaternary structure, homodimer.

It localises to the cytoplasm. The catalysed reaction is AMP + diphosphate = 5-phospho-alpha-D-ribose 1-diphosphate + adenine. Its pathway is purine metabolism; AMP biosynthesis via salvage pathway; AMP from adenine: step 1/1. Its function is as follows. Catalyzes a salvage reaction resulting in the formation of AMP, that is energically less costly than de novo synthesis. May contribute to the recycling of adenine into adenylate nucleotides and the inactivation of cytokinins by phosphoribosylation. Possesses low activity toward adenine and cytokinins. In Arabidopsis thaliana (Mouse-ear cress), this protein is Adenine phosphoribosyltransferase 3 (APT3).